The sequence spans 360 residues: Deoxyhypusine hydroxylase (360 aa).

HEAT-like PBS-type repeat units lie at residues 56–82 (LKHELAYVLGQLEDARALPTLKKILQD), 89–115 (VRHEAAEAMGAISDPSVLPILEQYRSD), and 213–245 (ERYRAMFALRNVAHGGGDGAIQAVLALARGLQD). Fe cation-binding residues include His58, Glu59, His91, and Glu92. Fe cation contacts are provided by His252, Glu253, His285, and Glu286.

It belongs to the deoxyhypusine hydroxylase family. Fe(2+) is required as a cofactor.

The protein localises to the cytoplasm. It localises to the nucleus. It catalyses the reaction [eIF5A protein]-deoxyhypusine + AH2 + O2 = [eIF5A protein]-hypusine + A + H2O. It participates in protein modification; eIF5A hypusination. Its function is as follows. Catalyzes the hydroxylation of the N(6)-(4-aminobutyl)-L-lysine intermediate to form hypusine, an essential post-translational modification only found in mature eIF-5A factor. This Mycosarcoma maydis (Corn smut fungus) protein is Deoxyhypusine hydroxylase.